The primary structure comprises 374 residues: tRNA-specific 2-thiouridylase MnmA (374 aa).

ATP contacts are provided by residues glycine 17 to serine 24 and methionine 43. Positions asparagine 103 to aspartate 105 are interaction with target base in tRNA. The Nucleophile role is filled by cysteine 108. Cysteine 108 and cysteine 204 form a disulfide bridge. Glycine 132 lines the ATP pocket. An interaction with tRNA region spans residues lysine 154–glutamine 156. The active-site Cysteine persulfide intermediate is cysteine 204. The interaction with tRNA stretch occupies residues arginine 316–tyrosine 317.

The protein belongs to the MnmA/TRMU family.

The protein resides in the cytoplasm. The catalysed reaction is S-sulfanyl-L-cysteinyl-[protein] + uridine(34) in tRNA + AH2 + ATP = 2-thiouridine(34) in tRNA + L-cysteinyl-[protein] + A + AMP + diphosphate + H(+). Functionally, catalyzes the 2-thiolation of uridine at the wobble position (U34) of tRNA, leading to the formation of s(2)U34. The protein is tRNA-specific 2-thiouridylase MnmA of Pseudomonas putida (strain GB-1).